A 421-amino-acid polypeptide reads, in one-letter code: UDP-N-acetylglucosamine 1-carboxyvinyltransferase 1 (421 aa).

Lys-22–Asn-23 contributes to the phosphoenolpyruvate binding site. Arg-95 is a binding site for UDP-N-acetyl-alpha-D-glucosamine. Catalysis depends on Cys-119, which acts as the Proton donor. Cys-119 is subject to 2-(S-cysteinyl)pyruvic acid O-phosphothioketal. UDP-N-acetyl-alpha-D-glucosamine-binding positions include Arg-124 to Gln-128, Asp-308, and Val-330.

The protein belongs to the EPSP synthase family. MurA subfamily.

It localises to the cytoplasm. It carries out the reaction phosphoenolpyruvate + UDP-N-acetyl-alpha-D-glucosamine = UDP-N-acetyl-3-O-(1-carboxyvinyl)-alpha-D-glucosamine + phosphate. Its pathway is cell wall biogenesis; peptidoglycan biosynthesis. Functionally, cell wall formation. Adds enolpyruvyl to UDP-N-acetylglucosamine. The polypeptide is UDP-N-acetylglucosamine 1-carboxyvinyltransferase 1 (Staphylococcus aureus (strain bovine RF122 / ET3-1)).